A 93-amino-acid polypeptide reads, in one-letter code: Large ribosomal subunit protein uL23c (93 aa).

The protein belongs to the universal ribosomal protein uL23 family. Part of the 50S ribosomal subunit.

The protein resides in the plastid. The protein localises to the chloroplast. Functionally, binds to 23S rRNA. The protein is Large ribosomal subunit protein uL23c (rpl23) of Fragaria ananassa (Strawberry).